A 279-amino-acid chain; its full sequence is Tryptophan synthase alpha chain (279 aa).

Active-site proton acceptor residues include Glu50 and Asp61.

This sequence belongs to the TrpA family. In terms of assembly, tetramer of two alpha and two beta chains.

The enzyme catalyses (1S,2R)-1-C-(indol-3-yl)glycerol 3-phosphate + L-serine = D-glyceraldehyde 3-phosphate + L-tryptophan + H2O. Its pathway is amino-acid biosynthesis; L-tryptophan biosynthesis; L-tryptophan from chorismate: step 5/5. Functionally, the alpha subunit is responsible for the aldol cleavage of indoleglycerol phosphate to indole and glyceraldehyde 3-phosphate. In Rhizobium johnstonii (strain DSM 114642 / LMG 32736 / 3841) (Rhizobium leguminosarum bv. viciae), this protein is Tryptophan synthase alpha chain.